Here is a 307-residue protein sequence, read N- to C-terminus: Aspartate carbamoyltransferase catalytic subunit (307 aa).

2 residues coordinate carbamoyl phosphate: R54 and T55. K83 contacts L-aspartate. The carbamoyl phosphate site is built by R104, H132, and Q135. Residues R165 and R228 each coordinate L-aspartate. Carbamoyl phosphate-binding residues include L267 and P268.

This sequence belongs to the aspartate/ornithine carbamoyltransferase superfamily. ATCase family. As to quaternary structure, heterododecamer (2C3:3R2) of six catalytic PyrB chains organized as two trimers (C3), and six regulatory PyrI chains organized as three dimers (R2).

It carries out the reaction carbamoyl phosphate + L-aspartate = N-carbamoyl-L-aspartate + phosphate + H(+). The protein operates within pyrimidine metabolism; UMP biosynthesis via de novo pathway; (S)-dihydroorotate from bicarbonate: step 2/3. In terms of biological role, catalyzes the condensation of carbamoyl phosphate and aspartate to form carbamoyl aspartate and inorganic phosphate, the committed step in the de novo pyrimidine nucleotide biosynthesis pathway. The chain is Aspartate carbamoyltransferase catalytic subunit from Clostridium perfringens (strain SM101 / Type A).